A 251-amino-acid polypeptide reads, in one-letter code: MNLISIPAFQDNYIWLLANRQKHCVIVDPGESAPVLATLAQGQYVPQAILLTHHHNDHVGGVADLRHHFPDIPVYGPQETAKKGATVIVNDGDSLTIAGQNYTIIAVPGHTLGHIAYYSSPYLFCGDTLFSAGCGRLLEGTPEQMYASIQRLAQLPDETLICCAHEYTLSNLKFAHAILPADQDIATYQQQIEQLRSKNLPSLPVKLQFERKINVFLRCNDIDLQRKIGITSPPDSLVSVFCELRSRKDSF.

Positions 53, 55, 57, 58, 110, 127, and 165 each coordinate Zn(2+).

The protein belongs to the metallo-beta-lactamase superfamily. Glyoxalase II family. Monomer. The cofactor is Zn(2+).

It carries out the reaction an S-(2-hydroxyacyl)glutathione + H2O = a 2-hydroxy carboxylate + glutathione + H(+). It participates in secondary metabolite metabolism; methylglyoxal degradation; (R)-lactate from methylglyoxal: step 2/2. Functionally, thiolesterase that catalyzes the hydrolysis of S-D-lactoyl-glutathione to form glutathione and D-lactic acid. The chain is Hydroxyacylglutathione hydrolase from Yersinia pseudotuberculosis serotype IB (strain PB1/+).